The sequence spans 140 residues: Smith-Magenis syndrome chromosomal region candidate gene 5 protein (140 aa).

The disordered stretch occupies residues 43–77 (CTGPSSQAPPQPPQASPPAAADHSRTPSLLASSHS). Positions 49-58 (QAPPQPPQAS) are enriched in pro residues.

In terms of tissue distribution, widely expressed.

This Homo sapiens (Human) protein is Smith-Magenis syndrome chromosomal region candidate gene 5 protein (SMCR5).